Here is a 313-residue protein sequence, read N- to C-terminus: Synaptophysin (313 aa).

The Cytoplasmic portion of the chain corresponds to 1 to 25 (MLLLADMDVVNQLVAGGQFRVVKEP). The MARVEL domain maps to 21–227 (VVKEPLGFVK…NLWFVFKETG (207 aa)). A helical membrane pass occupies residues 26 to 49 (LGFVKVLQWVFAIFAFATCGSYSG). Residues 50-106 (ELQLSVDCANKTKSDLNIEVEFEYPFRLHEVYFEAPTCQGDPKKIFLVGNYSSSAEF) are Vesicular-facing. N-linked (GlcNAc...) asparagine glycosylation occurs at asparagine 59. The residue at position 81 (tyrosine 81) is a Phosphotyrosine. N-linked (GlcNAc...) asparagine glycosylation occurs at asparagine 99. A helical transmembrane segment spans residues 107-130 (FVTVAVFAFLYSMGALATYIFLQN). At 131–137 (KYRENNK) the chain is on the cytoplasmic side. A helical transmembrane segment spans residues 138 to 161 (GPMLDFLATAVFAFMWLVSSSAWA). Residues 162–199 (KGLSDVKMATDPENIIKGMHVCHQPGNTCKELRDPVTS) lie on the Vesicular side of the membrane. The helical transmembrane segment at 200 to 223 (GLNTSVVFGFLNLVLWVGNLWFVF) threads the bilayer. Residues 224–313 (KETGWAAPFL…GAPTSFSNQM (90 aa)) lie on the Cytoplasmic side of the membrane. Residues 238-313 (GAPEKQPAPG…GAPTSFSNQM (76 aa)) are disordered. The segment covering 253-263 (AGYGQGPGGYG) has biased composition (gly residues). Residues 254-304 (GYGQGPGGYGPQDSYGPQGGYQPDYGQPASSGGGGYGPQGDYGQQGYGPQG) are repeats, Gly/Tyr-rich. A compositionally biased stretch (low complexity) spans 264 to 283 (PQDSYGPQGGYQPDYGQPAS). The span at 284–302 (SGGGGYGPQGDYGQQGYGP) shows a compositional bias: gly residues.

The protein belongs to the synaptophysin/synaptobrevin family. In terms of assembly, homohexamer or homotetramer. Interacts with SRCIN1. Interacts with VAMP2; the interaction is inhibited by interaction of VAPM2 with SEPT8. Post-translationally, ubiquitinated; mediated by SIAH1 or SIAH2 and leading to its subsequent proteasomal degradation. Phosphorylated by SRC. In terms of tissue distribution, characteristic of a type of small (30-80 nm) neurosecretory vesicles, including presynaptic vesicles, but also vesicles of various neuroendocrine cells of both neuronal and epithelial phenotype.

Its subcellular location is the cytoplasmic vesicle. It localises to the secretory vesicle. The protein localises to the synaptic vesicle membrane. The protein resides in the synapse. It is found in the synaptosome. In terms of biological role, possibly involved in structural functions as organizing other membrane components or in targeting the vesicles to the plasma membrane. Involved in the regulation of short-term and long-term synaptic plasticity. The sequence is that of Synaptophysin (SYP) from Bos taurus (Bovine).